We begin with the raw amino-acid sequence, 345 residues long: NADPH dehydrogenase (345 aa).

23–26 (SPMC) contributes to the FMN binding site. Residue tyrosine 28 participates in substrate binding. FMN contacts are provided by alanine 60 and glutamine 102. 164-167 (HGAH) contacts substrate. Residues arginine 215 and 307–308 (GR) contribute to the FMN site.

The protein belongs to the NADH:flavin oxidoreductase/NADH oxidase family. NamA subfamily. Homotetramer. FMN serves as cofactor.

The enzyme catalyses A + NADPH + H(+) = AH2 + NADP(+). Catalyzes the reduction of the double bond of an array of alpha,beta-unsaturated aldehydes and ketones. It also reduces the nitro group of nitroester and nitroaromatic compounds. It could have a role in detoxification processes. This Bacillus cereus (strain ATCC 10987 / NRS 248) protein is NADPH dehydrogenase.